We begin with the raw amino-acid sequence, 377 residues long: Cilia- and flagella-associated protein 263 (377 aa).

Coiled-coil stretches lie at residues 95 to 243 (LTAD…NQEL) and 280 to 354 (LRKE…SLKG).

This sequence belongs to the CFAP263 family. As to quaternary structure, forms a complex with CFAP184; the interaction is required for functional activity in cilia. Interacts with HAP1 and PCM1.

It is found in the cytoplasm. It localises to the cytoskeleton. The protein localises to the microtubule organizing center. Its subcellular location is the centrosome. The protein resides in the centriolar satellite. It is found in the cell projection. It localises to the cilium. Its function is as follows. Component of centriolar satellites contributing to primary cilium formation. In complex with CFAP263, acts as a regulator of ciliary beating that connects radial spoke 3 (RS3) to the inner dynein arm (IDA) and the nexin-dynein regulatory complex (N-DRC). The complex is positioned parallel to N-DRC and forms a connection between the arch at the base of RS3, the IDA tail and N-DRC. The chain is Cilia- and flagella-associated protein 263 from Homo sapiens (Human).